An 876-amino-acid polypeptide reads, in one-letter code: Envelope glycoprotein gp160 (876 aa).

The N-terminal stretch at 1 to 33 (MTVTMKVMKKNNRKSWSLYIAMALLIPCLSYSK) is a signal peptide. At 34–697 (QLYATVYSGV…ITKWLWYIKI (664 aa)) the chain is on the extracellular side. Cysteines 55 and 75 form a disulfide. Residues asparagine 60, asparagine 89, asparagine 138, asparagine 144, asparagine 152, asparagine 156, asparagine 181, asparagine 187, asparagine 197, asparagine 229, asparagine 234, asparagine 241, asparagine 262, asparagine 276, asparagine 293, asparagine 323, asparagine 337, asparagine 357, and asparagine 361 are each glycosylated (N-linked (GlcNAc...) asparagine; by host). Cystine bridges form between cysteine 120–cysteine 205, cysteine 127–cysteine 196, cysteine 132–cysteine 153, cysteine 218–cysteine 247, and cysteine 228–cysteine 239. The segment at 132 to 152 (CVDLQTNKTGLLNETINEMRN) is V1. A V2 region spans residues 153-196 (CSFNVTTVLTDKKEQKQALFYVSDLSKVNDSNAVNGTTYMLTNC). A V3 region spans residues 296–333 (CIREGIAEVQDIYTGPMRWRSMTLKRSNNTSPRSRVAY). A disulfide bond links cysteine 296 and cysteine 334. Residues 369-379 (TSGGDAEVSHL) are CD4-binding loop. Cystine bridges form between cysteine 383–cysteine 452 and cysteine 390–cysteine 425. The segment at 390 to 425 (CNTSGMFNYTFINCTKSGCQEIKGSNETNKNGTIPC) is V4. Residues asparagine 391, asparagine 397, asparagine 402, asparagine 415, asparagine 420, asparagine 449, asparagine 455, and asparagine 468 are each glycosylated (N-linked (GlcNAc...) asparagine; by host). V5 stretches follow at residues 468-478 (NSTGENTLRPV) and 470-478 (TGENTLRPV). Residues 524–544 (AVGLGMLFLGVLSAAGSTMGA) form a fusion peptide region. Residues 586–604 (RQLRARLQALETLIQNQQR) are immunosuppression. Cysteines 610 and 616 form a disulfide. N-linked (GlcNAc...) asparagine; by host glycosylation is found at asparagine 623, asparagine 638, and asparagine 650. Positions 646-680 (QHINNVSSIIYDEIQAAQDQQEKNVKALLELDEWA) form a coiled coil. The interval 675–696 (ELDEWASLWNWFDITKWLWYIK) is MPER; binding to GalCer. A helical transmembrane segment spans residues 698-718 (AIIIVGALIGIRVIMIILNLV). Over 719 to 876 (KNIRQGYQPL…IRQGAERILV (158 aa)) the chain is Cytoplasmic. The YXXL motif; contains endocytosis signal signature appears at 725–728 (YQPL).

The protein belongs to the HIV-1 env protein family. As to quaternary structure, the mature envelope protein (Env) consists of a homotrimer of non-covalently associated gp120-gp41 heterodimers. The resulting complex protrudes from the virus surface as a spike. There seems to be as few as 10 spikes on the average virion. Interacts with host CD4, CCR5 and CXCR4. Gp120 also interacts with the C-type lectins CD209/DC-SIGN and CLEC4M/DC-SIGNR (collectively referred to as DC-SIGN(R)). Gp120 and gp41 interact with GalCer. Gp120 interacts with host ITGA4/ITGB7 complex; on CD4+ T-cells, this interaction results in rapid activation of integrin ITGAL/LFA-1, which facilitates efficient cell-to-cell spreading of HIV-1. Gp120 interacts with cell-associated heparan sulfate; this interaction increases virus infectivity on permissive cells and may be involved in infection of CD4- cells. In terms of assembly, the mature envelope protein (Env) consists of a homotrimer of non-covalently associated gp120-gp41 heterodimers. The resulting complex protrudes from the virus surface as a spike. There seems to be as few as 10 spikes on the average virion. Highly glycosylated by host. The high number of glycan on the protein is reffered to as 'glycan shield' because it contributes to hide protein sequence from adaptive immune system. Post-translationally, palmitoylation of the transmembrane protein and of Env polyprotein (prior to its proteolytic cleavage) is essential for their association with host cell membrane lipid rafts. Palmitoylation is therefore required for envelope trafficking to classical lipid rafts, but not for viral replication. In terms of processing, specific enzymatic cleavages in vivo yield mature proteins. Envelope glycoproteins are synthesized as an inactive precursor that is heavily N-glycosylated and processed likely by host cell furin in the Golgi to yield the mature SU and TM proteins. The cleavage site between SU and TM requires the minimal sequence [KR]-X-[KR]-R. About 2 of the 9 disulfide bonds of gp41 are reduced by P4HB/PDI, following binding to CD4 receptor.

The protein resides in the virion membrane. The protein localises to the host cell membrane. It localises to the host endosome membrane. Functionally, oligomerizes in the host endoplasmic reticulum into predominantly trimers. In a second time, gp160 transits in the host Golgi, where glycosylation is completed. The precursor is then proteolytically cleaved in the trans-Golgi and thereby activated by cellular furin or furin-like proteases to produce gp120 and gp41. Attaches the virus to the host lymphoid cell by binding to the primary receptor CD4. This interaction induces a structural rearrangement creating a high affinity binding site for a chemokine coreceptor like CXCR4 and/or CCR5. Acts as a ligand for CD209/DC-SIGN and CLEC4M/DC-SIGNR, which are respectively found on dendritic cells (DCs), and on endothelial cells of liver sinusoids and lymph node sinuses. These interactions allow capture of viral particles at mucosal surfaces by these cells and subsequent transmission to permissive cells. HIV subverts the migration properties of dendritic cells to gain access to CD4+ T-cells in lymph nodes. Virus transmission to permissive T-cells occurs either in trans (without DCs infection, through viral capture and transmission), or in cis (following DCs productive infection, through the usual CD4-gp120 interaction), thereby inducing a robust infection. In trans infection, bound virions remain infectious over days and it is proposed that they are not degraded, but protected in non-lysosomal acidic organelles within the DCs close to the cell membrane thus contributing to the viral infectious potential during DCs' migration from the periphery to the lymphoid tissues. On arrival at lymphoid tissues, intact virions recycle back to DCs' cell surface allowing virus transmission to CD4+ T-cells. Its function is as follows. Acts as a class I viral fusion protein. Under the current model, the protein has at least 3 conformational states: pre-fusion native state, pre-hairpin intermediate state, and post-fusion hairpin state. During fusion of viral and target intracellular membranes, the coiled coil regions (heptad repeats) assume a trimer-of-hairpins structure, positioning the fusion peptide in close proximity to the C-terminal region of the ectodomain. The formation of this structure appears to drive apposition and subsequent fusion of viral and target cell membranes. Complete fusion occurs in host cell endosomes and is dynamin-dependent, however some lipid transfer might occur at the plasma membrane. The virus undergoes clathrin-dependent internalization long before endosomal fusion, thus minimizing the surface exposure of conserved viral epitopes during fusion and reducing the efficacy of inhibitors targeting these epitopes. Membranes fusion leads to delivery of the nucleocapsid into the cytoplasm. The protein is Envelope glycoprotein gp160 of Homo sapiens (Human).